The following is a 935-amino-acid chain: Phosphoenolpyruvate carboxylase (935 aa).

Residues H161 and K593 contribute to the active site.

Belongs to the PEPCase type 1 family. It depends on Mg(2+) as a cofactor.

The catalysed reaction is oxaloacetate + phosphate = phosphoenolpyruvate + hydrogencarbonate. Functionally, forms oxaloacetate, a four-carbon dicarboxylic acid source for the tricarboxylic acid cycle. The sequence is that of Phosphoenolpyruvate carboxylase from Mycobacterium avium (strain 104).